The sequence spans 671 residues: DNA ligase (671 aa).

Residues Asp-32–Asp-36, Ser-81–Leu-82, and Glu-113 each bind NAD(+). Lys-115 (N6-AMP-lysine intermediate) is an active-site residue. 4 residues coordinate NAD(+): Arg-136, Glu-173, Lys-290, and Lys-314. Residues Cys-408, Cys-411, Cys-426, and Cys-432 each contribute to the Zn(2+) site. One can recognise a BRCT domain in the interval Glu-593–Ser-671.

This sequence belongs to the NAD-dependent DNA ligase family. LigA subfamily. Mg(2+) is required as a cofactor. The cofactor is Mn(2+).

It carries out the reaction NAD(+) + (deoxyribonucleotide)n-3'-hydroxyl + 5'-phospho-(deoxyribonucleotide)m = (deoxyribonucleotide)n+m + AMP + beta-nicotinamide D-nucleotide.. In terms of biological role, DNA ligase that catalyzes the formation of phosphodiester linkages between 5'-phosphoryl and 3'-hydroxyl groups in double-stranded DNA using NAD as a coenzyme and as the energy source for the reaction. It is essential for DNA replication and repair of damaged DNA. This chain is DNA ligase, found in Escherichia coli O81 (strain ED1a).